A 117-amino-acid chain; its full sequence is Large ribosomal subunit protein uL18 (117 aa).

The protein belongs to the universal ribosomal protein uL18 family. As to quaternary structure, part of the 50S ribosomal subunit; part of the 5S rRNA/L5/L18/L25 subcomplex. Contacts the 5S and 23S rRNAs.

Functionally, this is one of the proteins that bind and probably mediate the attachment of the 5S RNA into the large ribosomal subunit, where it forms part of the central protuberance. The polypeptide is Large ribosomal subunit protein uL18 (Leuconostoc citreum (strain KM20)).